The following is a 294-amino-acid chain: Nucleotide-binding protein Daud_0300 (294 aa).

11–18 contacts ATP; that stretch reads GLSGAGKT. 62–65 contacts GTP; the sequence is DIRG.

Belongs to the RapZ-like family.

Functionally, displays ATPase and GTPase activities. The protein is Nucleotide-binding protein Daud_0300 of Desulforudis audaxviator (strain MP104C).